Here is a 337-residue protein sequence, read N- to C-terminus: uncharacterized protein (337 aa).

Belongs to the NAD(P)-dependent epimerase/dehydratase family.

This is an uncharacterized protein from Escherichia coli (strain K12).